The sequence spans 487 residues: Betaine aldehyde dehydrogenase (487 aa).

2 residues coordinate K(+): S26 and D93. Position 150–152 (150–152 (GAW)) interacts with NAD(+). K162 (charge relay system) is an active-site residue. NAD(+) contacts are provided by residues 176-179 (KPSE) and 229-232 (SVPT). L244 serves as a coordination point for K(+). Catalysis depends on E250, which acts as the Proton acceptor. NAD(+) contacts are provided by G252, C284, and E384. C284 (nucleophile) is an active-site residue. Residue C284 is modified to Cysteine sulfenic acid (-SOH). The K(+) site is built by K454 and G457. E461 functions as the Charge relay system in the catalytic mechanism.

This sequence belongs to the aldehyde dehydrogenase family. Dimer of dimers. K(+) is required as a cofactor.

It carries out the reaction betaine aldehyde + NAD(+) + H2O = glycine betaine + NADH + 2 H(+). Its pathway is amine and polyamine biosynthesis; betaine biosynthesis via choline pathway; betaine from betaine aldehyde: step 1/1. Its function is as follows. Involved in the biosynthesis of the osmoprotectant glycine betaine. Catalyzes the irreversible oxidation of betaine aldehyde to the corresponding acid. This Rhizobium etli (strain CIAT 652) protein is Betaine aldehyde dehydrogenase.